The primary structure comprises 309 residues: Neuropeptide-like 1 (309 aa).

Positions 1–28 (MQAVLQSAHSSRRLMLLLSMLLNAAIQP) are cleaved as a signal peptide. The propeptide occupies 29–99 (RSIIVSATDD…GEYPDYLEED (71 aa)). Residues 126 to 147 (GQLPTAEPGEDYGDADSGEPSE) form a disordered region. The segment covering 133–144 (PGEDYGDADSGE) has biased composition (acidic residues). Position 164 is a tyrosine amide (Y164). N182 is modified (asparagine amide).

In terms of tissue distribution, MTYamide peptide: Expressed in the larval CNS (at protein level). NAP peptide: Expressed in the larval CNS (at protein level). IPNamide peptide: Expressed in the ventral ganglion of the third larval instar and adult brain (at protein level).

Its subcellular location is the secreted. Functionally, acts as a ligand for the receptor-type guanylate cyclase Gyc76C. Stimulates Gyc76c-dependent cGMP production and modulates the IMD innate immune pathway in response to salt stress by inducing nuclear translocation of NF-kappa-B protein Rel which leads to increased expression of the antimicrobial peptide diptericin. Does not appear to play a role in Gyc76C-mediated wing development. In Drosophila melanogaster (Fruit fly), this protein is Neuropeptide-like 1 (Nplp1).